The primary structure comprises 339 residues: MIKEALARVIAGQDLPEQMAAGAMEAIMTGAATNAQIGSFLTALRMKGESPAEVAAFAAVMRVHAVQFQVRGGQGRLVDTCGTGGDQAGTFNISTAAAIVAAGAGVRIVKHGNRSASGRCGSADVLEELGVNLAMTPAQEQATLEQAGIVFLFAQTHHPAMKHVAAARKEIGIRTVFNILGPLTNPAGADAQLLGVPEPSLLDLLPPVLQTLGVDHAMIVCGGGLDEISTATATEVVEVKGTEILRYTLTPEQFGIPPVNIAELQGGDVHTSAAIIKGILDGEGGACREITLLNAAAAIYLGGRAVDLNEGVRLAATSIDSGAAAVTLQTLISTSRGET.

5-phospho-alpha-D-ribose 1-diphosphate-binding positions include Gly-82, 85 to 86 (GD), Thr-90, 92 to 95 (NIST), 110 to 118 (KHGNRSASG), and Ser-122. Residue Gly-82 participates in anthranilate binding. Ser-94 is a binding site for Mg(2+). Asn-113 contributes to the anthranilate binding site. Arg-168 provides a ligand contact to anthranilate. 2 residues coordinate Mg(2+): Asp-226 and Glu-227.

Belongs to the anthranilate phosphoribosyltransferase family. Homodimer. It depends on Mg(2+) as a cofactor.

It carries out the reaction N-(5-phospho-beta-D-ribosyl)anthranilate + diphosphate = 5-phospho-alpha-D-ribose 1-diphosphate + anthranilate. It participates in amino-acid biosynthesis; L-tryptophan biosynthesis; L-tryptophan from chorismate: step 2/5. Functionally, catalyzes the transfer of the phosphoribosyl group of 5-phosphorylribose-1-pyrophosphate (PRPP) to anthranilate to yield N-(5'-phosphoribosyl)-anthranilate (PRA). The protein is Anthranilate phosphoribosyltransferase of Methanosphaerula palustris (strain ATCC BAA-1556 / DSM 19958 / E1-9c).